Consider the following 130-residue polypeptide: Astrocytic phosphoprotein PEA-15 (130 aa).

The DED domain occupies 3-81; it reads EYGTLLQDLT…RPDLLTMVVD (79 aa). Phosphoserine occurs at positions 61, 90, 104, and 116. The microtubule-binding stretch occupies residues 98-107; the sequence is KLTRIPSAKK. The tract at residues 122 to 129 is microtubule-binding; that stretch reads KLAPPPKK.

Binds RPS6KA3, MAPK3 and MAPK1. Transient interaction with PLD1 and PLD2. Interacts with CASP8 and FADD. Post-translationally, phosphorylated by protein kinase C and calcium-calmodulin-dependent protein kinase. These phosphorylation events are modulated by neurotransmitters or hormones. Ubiquitously expressed. Most abundant in tissues such as heart, brain, muscle and adipose tissue which utilize glucose as an energy source. Lower expression in glucose-producing tissues. Higher levels of expression are found in tissues from individuals with type 2 diabetes than in controls.

It is found in the cytoplasm. Blocks Ras-mediated inhibition of integrin activation and modulates the ERK MAP kinase cascade. Inhibits RPS6KA3 activities by retaining it in the cytoplasm. Inhibits both TNFRSF6- and TNFRSF1A-mediated CASP8 activity and apoptosis. Regulates glucose transport by controlling both the content of SLC2A1 glucose transporters on the plasma membrane and the insulin-dependent trafficking of SLC2A4 from the cell interior to the surface. The protein is Astrocytic phosphoprotein PEA-15 (PEA15) of Homo sapiens (Human).